Here is a 224-residue protein sequence, read N- to C-terminus: ATP synthase subunit a (224 aa).

The next 6 helical transmembrane spans lie at 17-37, 72-92, 99-119, 125-145, 155-175, and 184-204; these read LSLN…IYWL, IFIS…FPYI, LTLT…YGWI, MFAH…MVCI, GTLA…LTLL, and YLLV…ESAV.

Belongs to the ATPase A chain family. F-type ATPases have 2 components, CF(1) - the catalytic core - and CF(0) - the membrane proton channel. CF(1) has five subunits: alpha(3), beta(3), gamma(1), delta(1), epsilon(1). CF(0) has three main subunits: a, b and c.

The protein localises to the mitochondrion inner membrane. Mitochondrial membrane ATP synthase (F(1)F(0) ATP synthase or Complex V) produces ATP from ADP in the presence of a proton gradient across the membrane which is generated by electron transport complexes of the respiratory chain. F-type ATPases consist of two structural domains, F(1) - containing the extramembraneous catalytic core and F(0) - containing the membrane proton channel, linked together by a central stalk and a peripheral stalk. During catalysis, ATP synthesis in the catalytic domain of F(1) is coupled via a rotary mechanism of the central stalk subunits to proton translocation. Key component of the proton channel; it may play a direct role in the translocation of protons across the membrane. The protein is ATP synthase subunit a (mt:ATPase6) of Drosophila yakuba (Fruit fly).